Reading from the N-terminus, the 163-residue chain is Protein NAG1 (163 aa).

A helical transmembrane segment spans residues 76-96 (ACFSVRIVLPLSLTISISALM).

The protein localises to the membrane. In terms of biological role, involved in yeast cell wall biogenesis. The polypeptide is Protein NAG1 (NAG1) (Saccharomyces cerevisiae (strain ATCC 204508 / S288c) (Baker's yeast)).